The following is a 449-amino-acid chain: GTPase Der (449 aa).

EngA-type G domains are found at residues 4–174 and 183–358; these read PIVA…PPKT and LRIA…VQRQ. GTP contacts are provided by residues 10-17, 57-61, 126-129, 189-196, 236-240, and 301-304; these read GRPNVGKS, DTAGV, NKCD, DTAGI, and NKWD. The region spanning 359 to 444 is the KH-like domain; the sequence is KRVPTSELNN…PIVIVFRSRE (86 aa).

It belongs to the TRAFAC class TrmE-Era-EngA-EngB-Septin-like GTPase superfamily. EngA (Der) GTPase family. As to quaternary structure, associates with the 50S ribosomal subunit.

GTPase that plays an essential role in the late steps of ribosome biogenesis. The chain is GTPase Der from Chloroflexus aurantiacus (strain ATCC 29366 / DSM 635 / J-10-fl).